A 728-amino-acid polypeptide reads, in one-letter code: MDDDGELGMFFPSWTSKNPIDTVESRGLMFSCFVAALVGILTIAYTAFQWRRNINLSWTKAIARSKKNPKARHKVPVAPHSWELDPIARAKNLNCCVCLKSMSPSQAIVASESFFHRCTICGAAAHFNCSSSAPKDCKCVSMVGFEHVVHQWAVRWTEGADQTDDSSFCSYCDESCSSSFLGGSPIWCCLWCQRLVHVDCHSNMSNETGDICDLGPLRRLILCPLYVKELTRNPSGGFLSSITHGANELASTALASIRIQSKKYKQTNETSADTGNSGSNCDESTESTADTGPTVNGAHAVLENSISVMNGDSSNGDSDSNGKLEKKPSVKRTGSFGQKEYHALRSKLKYELADLPSDARPLLVFINKKSGAQRGDSLRQRLHLHLNPVQVFELSSVQGPEVGLFLFRKVPHFRVLVCGGDGTAGWVLDAIEKQNFISPPAVAILPAGTGNDLSRVLNWGGGLGSVERQGGLSTVLQNIEHAAVTVLDRWKVSILNQQGKQLQPPKYMNNYIGVGCDAKVALEIHNLREENPERFYSQFMNKVLYAREGARSIMDRTFEDFPWQVRVEVDGVDIEVPEDAEGILVANIGSYMGGVDLWQNEDETYENFDPQSMHDKIVEVVSISGTWHLGKLQVGLSRARRLAQGSAVKIQLCAPLPVQIDGEPWNQQPCTLTISHHGQAFMLKRAAEEPLGHAAAIITDVLENAETNQVINASQKRTLLQEMALRLT.

A helical membrane pass occupies residues 27–48 (GLMFSCFVAALVGILTIAYTAF). Phorbol-ester/DAG-type zinc fingers lie at residues 79-137 (PHSW…PKDC) and 149-212 (VHQW…GDIC). 2 disordered regions span residues 265-296 (KQTN…PTVN) and 308-336 (VMNG…TGSF). The span at 267–294 (TNETSADTGNSGSNCDESTESTADTGPT) shows a compositional bias: polar residues. The segment covering 310-319 (NGDSSNGDSD) has biased composition (low complexity). Positions 357–496 (SDARPLLVFI…LDRWKVSILN (140 aa)) constitute a DAGKc domain. Residues Lys-491 and Lys-500 each participate in a glycyl lysine isopeptide (Lys-Gly) (interchain with G-Cter in ubiquitin) cross-link.

The protein belongs to the eukaryotic diacylglycerol kinase family. Monomer. In terms of tissue distribution, expressed in roots, shoots, and leaves.

Its subcellular location is the membrane. It carries out the reaction a 1,2-diacyl-sn-glycerol + ATP = a 1,2-diacyl-sn-glycero-3-phosphate + ADP + H(+). In terms of biological role, phosphorylates the second messenger diacylglycerol (DAG) to generate phosphatidic acid (PA), another important signaling molecule. PA is required for plant development and responses to abiotic stress and pathogen attack. May be involved in the accumulation of PA during cold stress. The polypeptide is Diacylglycerol kinase 1 (DGK1) (Arabidopsis thaliana (Mouse-ear cress)).